A 341-amino-acid chain; its full sequence is Phosphoribosylformylglycinamidine cyclo-ligase (341 aa).

This sequence belongs to the AIR synthase family.

The protein localises to the cytoplasm. The catalysed reaction is 2-formamido-N(1)-(5-O-phospho-beta-D-ribosyl)acetamidine + ATP = 5-amino-1-(5-phospho-beta-D-ribosyl)imidazole + ADP + phosphate + H(+). It participates in purine metabolism; IMP biosynthesis via de novo pathway; 5-amino-1-(5-phospho-D-ribosyl)imidazole from N(2)-formyl-N(1)-(5-phospho-D-ribosyl)glycinamide: step 2/2. The protein is Phosphoribosylformylglycinamidine cyclo-ligase of Caldicellulosiruptor bescii (strain ATCC BAA-1888 / DSM 6725 / KCTC 15123 / Z-1320) (Anaerocellum thermophilum).